The following is a 725-amino-acid chain: uncharacterized protein (725 aa).

The region spanning 363 to 556 (GTYVEIPLYS…FVTTRPEDSC (194 aa)) is the FtsK domain. Residue 382-389 (GRTRGGKS) coordinates ATP.

Belongs to the FtsK/SpoIIIE/SftA family.

Functionally, probable DNA motor protein. May track DNA in a ATP-dependent manner by generating positive supercoils in front of it and negative supercoils behind it. This is an uncharacterized protein from Nostoc sp. (strain PCC 7120 / SAG 25.82 / UTEX 2576).